Consider the following 51-residue polypeptide: Sperm protamine P1 (51 aa).

This sequence belongs to the protamine P1 family. Testis.

It is found in the nucleus. Its subcellular location is the chromosome. Functionally, protamines substitute for histones in the chromatin of sperm during the haploid phase of spermatogenesis. They compact sperm DNA into a highly condensed, stable and inactive complex. The polypeptide is Sperm protamine P1 (PRM1) (Trachypithecus francoisi (Francois' leaf monkey)).